Reading from the N-terminus, the 90-residue chain is Elongation factor 1-beta (90 aa).

Belongs to the EF-1-beta/EF-1-delta family.

Functionally, promotes the exchange of GDP for GTP in EF-1-alpha/GDP, thus allowing the regeneration of EF-1-alpha/GTP that could then be used to form the ternary complex EF-1-alpha/GTP/AAtRNA. The sequence is that of Elongation factor 1-beta from Desulfurococcus amylolyticus (strain DSM 18924 / JCM 16383 / VKM B-2413 / 1221n) (Desulfurococcus kamchatkensis).